Here is a 120-residue protein sequence, read N- to C-terminus: Large ribosomal subunit protein uL18 (120 aa).

The protein belongs to the universal ribosomal protein uL18 family. In terms of assembly, part of the 50S ribosomal subunit; part of the 5S rRNA/L5/L18/L25 subcomplex. Contacts the 5S and 23S rRNAs.

Its function is as follows. This is one of the proteins that bind and probably mediate the attachment of the 5S RNA into the large ribosomal subunit, where it forms part of the central protuberance. The sequence is that of Large ribosomal subunit protein uL18 from Rhizobium etli (strain CIAT 652).